A 211-amino-acid polypeptide reads, in one-letter code: GTP-binding protein ypt5 (211 aa).

21 to 28 contacts GTP; that stretch reads GDSAVGKS. The short motif at 43–51 is the Effector region element; that stretch reads RESTIGAAF. Residues 70 to 74 and 128 to 131 contribute to the GTP site; these read DTAGQ and NKLD. Residues Cys209 and Cys211 are each lipidated (S-geranylgeranyl cysteine). Position 211 is a cysteine methyl ester (Cys211).

Belongs to the small GTPase superfamily. Rab family.

It localises to the cell membrane. In terms of biological role, protein transport. Probably involved in vesicular traffic. The sequence is that of GTP-binding protein ypt5 (ypt5) from Schizosaccharomyces pombe (strain 972 / ATCC 24843) (Fission yeast).